Here is a 332-residue protein sequence, read N- to C-terminus: Adenosine receptor A2b (332 aa).

Topologically, residues 1–8 (MPLEAQDA) are extracellular. Residues 9–33 (VYVALELALAALSVTGNVLVCAAVG) form a helical membrane-spanning segment. The Cytoplasmic portion of the chain corresponds to 34-43 (TSSALQTPTN). A helical transmembrane segment spans residues 44–67 (YFLVSLAAADVAVGLFAIPFAVTI). Residues 68-78 (SLGFCTDFHSC) lie on the Extracellular side of the membrane. A disulfide bond links C78 and C170. Residues 79–101 (LFLACFVLVLTQSSIFSLLAVAV) form a helical membrane-spanning segment. The Cytoplasmic portion of the chain corresponds to 102–121 (DRYLAVRVPLRYKSLVTGAR). The chain crosses the membrane as a helical span at residues 122 to 144 (ARGVIAALWVLAFGIGLTPFLGW). Over 145–177 (NDRKIATNCTEPGDAATNVSCCLIRCLFENVVP) the chain is Extracellular. 2 N-linked (GlcNAc...) asparagine glycosylation sites follow: N152 and N162. E173 is an adenosine binding site. A helical transmembrane segment spans residues 178 to 202 (MSYMVYFNFFGCVLPPLLIMLVIYV). The Cytoplasmic portion of the chain corresponds to 203 to 234 (KIFLVACRQLQRTELMDHSRTVLQREIHAAKS). The chain crosses the membrane as a helical span at residues 235–258 (LALIVGIFALCWLPVHTINCASLF). N253 is a binding site for adenosine. The Extracellular portion of the chain corresponds to 259 to 266 (QPTWAKVK). The chain crosses the membrane as a helical span at residues 267–290 (PKWAINTAILLSHANSAVNPIVYA). 2 residues coordinate adenosine: S278 and H279. At 291-332 (YRNRDFRYTFHKIISRYILCRTHILKSGEGQVGSQPTLQLGL) the chain is on the cytoplasmic side. C310 carries S-palmitoyl cysteine lipidation.

The protein belongs to the G-protein coupled receptor 1 family.

The protein resides in the cell membrane. Its function is as follows. Receptor for adenosine. The activity of this receptor is mediated by G proteins which activate adenylyl cyclase. The protein is Adenosine receptor A2b (ADORA2B) of Bos taurus (Bovine).